The primary structure comprises 95 residues: Small ribosomal subunit protein bS6 (95 aa).

The protein belongs to the bacterial ribosomal protein bS6 family.

Binds together with bS18 to 16S ribosomal RNA. In Bacillus pumilus (strain SAFR-032), this protein is Small ribosomal subunit protein bS6.